Reading from the N-terminus, the 403-residue chain is Formate-dependent phosphoribosylglycinamide formyltransferase (403 aa).

Residues 27–28 (EL) and E87 each bind N(1)-(5-phospho-beta-D-ribosyl)glycinamide. Residues R120, K161, 166 to 171 (SSGKGQ), 201 to 204 (EGFV), and E209 contribute to the ATP site. An ATP-grasp domain is found at 125–319 (RLAAEELGLP…EFELHARAIL (195 aa)). The Mg(2+) site is built by E278 and E290. N(1)-(5-phospho-beta-D-ribosyl)glycinamide is bound by residues D297, K366, and 373 to 374 (RR). The segment at 382–403 (GPDVETARSRAREAASRVEPVA) is disordered. The span at 386 to 397 (ETARSRAREAAS) shows a compositional bias: basic and acidic residues.

This sequence belongs to the PurK/PurT family. Homodimer.

It catalyses the reaction N(1)-(5-phospho-beta-D-ribosyl)glycinamide + formate + ATP = N(2)-formyl-N(1)-(5-phospho-beta-D-ribosyl)glycinamide + ADP + phosphate + H(+). The protein operates within purine metabolism; IMP biosynthesis via de novo pathway; N(2)-formyl-N(1)-(5-phospho-D-ribosyl)glycinamide from N(1)-(5-phospho-D-ribosyl)glycinamide (formate route): step 1/1. Functionally, involved in the de novo purine biosynthesis. Catalyzes the transfer of formate to 5-phospho-ribosyl-glycinamide (GAR), producing 5-phospho-ribosyl-N-formylglycinamide (FGAR). Formate is provided by PurU via hydrolysis of 10-formyl-tetrahydrofolate. The chain is Formate-dependent phosphoribosylglycinamide formyltransferase from Rhodococcus jostii (strain RHA1).